The chain runs to 160 residues: Cytosolic iron-sulfur assembly component 2A (160 aa).

Residues His89, His123, Glu150, and Glu153 each contribute to the Zn(2+) site.

Belongs to the MIP18 family. Monomer and homodimer. Component of the CIA complex. Interacts with CIAO1. Interacts with IREB2. Interacts with APAF1. Substantially enriched in macrophages.

The protein localises to the cytoplasm. Functionally, component of the cytosolic iron-sulfur protein assembly (CIA) complex, a multiprotein complex that mediates the incorporation of iron-sulfur cluster into extramitochondrial Fe/S proteins. As a CIA complex component and in collaboration with CIAO1 specifically matures ACO1 and stabilizes IREB2, connecting cytosolic iron-sulfur protein maturation with cellular iron regulation. May play a role in chromosome segregation through establishment of sister chromatid cohesion. May induce apoptosis in collaboration with APAF1. The chain is Cytosolic iron-sulfur assembly component 2A from Homo sapiens (Human).